Consider the following 182-residue polypeptide: Protein canopy homolog 2 (182 aa).

The first 20 residues, 1 to 20 (MKGWGWLALLLGALLGTAWA), serve as a signal peptide directing secretion. Residues 24–175 (QDLHCGACRA…KRTDLCDHAL (152 aa)) form the Saposin B-type domain. 3 disulfide bridges follow: cysteine 28-cysteine 171, cysteine 31-cysteine 164, and cysteine 86-cysteine 137. At serine 115 the chain carries Phosphoserine. The Prevents secretion from ER motif lies at 179 to 182 (HDEL).

It belongs to the canopy family. Interacts with MYLIP/MIR. In terms of tissue distribution, expressed in different tissues. Highest levels are detected in adult placenta, liver and pancreas.

It is found in the endoplasmic reticulum. Positive regulator of neurite outgrowth by stabilizing myosin regulatory light chain (MRLC). It prevents MIR-mediated MRLC ubiquitination and its subsequent proteasomal degradation. The sequence is that of Protein canopy homolog 2 (CNPY2) from Homo sapiens (Human).